A 60-amino-acid chain; its full sequence is Single-pass membrane and coiled-coil domain-containing protein 4 homolog (60 aa).

The segment at M1 to E22 is disordered. Basic and acidic residues predominate over residues Q8–E22. Residues Q8 to V34 are a coiled coil. A helical transmembrane segment spans residues L30–F50.

Belongs to the SMCO4 family.

Its subcellular location is the membrane. The sequence is that of Single-pass membrane and coiled-coil domain-containing protein 4 homolog from Culex quinquefasciatus (Southern house mosquito).